A 261-amino-acid chain; its full sequence is Enolase-phosphatase E1 (261 aa).

2 residues coordinate Mg(2+): Asp16 and Glu18. Residues 153-154 and Lys187 contribute to the substrate site; that span reads SS. Residue Asp212 coordinates Mg(2+).

The protein belongs to the HAD-like hydrolase superfamily. MasA/MtnC family. As to quaternary structure, monomer. The cofactor is Mg(2+).

It is found in the cytoplasm. The protein resides in the nucleus. The enzyme catalyses 5-methylsulfanyl-2,3-dioxopentyl phosphate + H2O = 1,2-dihydroxy-5-(methylsulfanyl)pent-1-en-3-one + phosphate. The protein operates within amino-acid biosynthesis; L-methionine biosynthesis via salvage pathway; L-methionine from S-methyl-5-thio-alpha-D-ribose 1-phosphate: step 3/6. It functions in the pathway amino-acid biosynthesis; L-methionine biosynthesis via salvage pathway; L-methionine from S-methyl-5-thio-alpha-D-ribose 1-phosphate: step 4/6. In terms of biological role, bifunctional enzyme that catalyzes the enolization of 2,3-diketo-5-methylthiopentyl-1-phosphate (DK-MTP-1-P) into the intermediate 2-hydroxy-3-keto-5-methylthiopentenyl-1-phosphate (HK-MTPenyl-1-P), which is then dephosphorylated to form the acireductone 1,2-dihydroxy-3-keto-5-methylthiopentene (DHK-MTPene). The protein is Enolase-phosphatase E1 of Bos taurus (Bovine).